The following is a 206-amino-acid chain: Large ribosomal subunit protein uL13x (206 aa).

It belongs to the universal ribosomal protein uL13 family.

This is Large ribosomal subunit protein uL13x (RPL13AC) from Arabidopsis thaliana (Mouse-ear cress).